The chain runs to 120 residues: Large ribosomal subunit protein uL18 (120 aa).

Residues 1–10 (MKLTRRESKE) are compositionally biased toward basic and acidic residues. Residues 1 to 26 (MKLTRRESKERRHRRVRGKVQGSPER) are disordered.

The protein belongs to the universal ribosomal protein uL18 family. As to quaternary structure, part of the 50S ribosomal subunit; part of the 5S rRNA/L5/L18/L25 subcomplex. Contacts the 5S and 23S rRNAs.

Its function is as follows. This is one of the proteins that bind and probably mediate the attachment of the 5S RNA into the large ribosomal subunit, where it forms part of the central protuberance. In Nostoc sp. (strain PCC 7120 / SAG 25.82 / UTEX 2576), this protein is Large ribosomal subunit protein uL18.